The sequence spans 102 residues: MAALNGLVLLLLTISAMFISECYSSGESQSIQRKGQCEEVICHRKLNHLGERVTSGCPTGCLCVIREPDNVDNANGTCYALMSSTTTTTTTPDGTTTSEEEE.

The N-terminal stretch at 1 to 24 (MAALNGLVLLLLTISAMFISECYS) is a signal peptide. 3 disulfides stabilise this stretch: Cys-37-Cys-61, Cys-42-Cys-63, and Cys-57-Cys-78.

The protein belongs to the RaCI family. Expressed in salivary glands.

It localises to the secreted. In terms of biological role, complement inhibitor. Prevents complement-mediated C5 activation by binding to C5. Binds C5 at a different binding site than the other tick complement inhibitors OmCI and CirpT1, and the drug eculizumab. Inhibits complement in human and guinea pig but not in other species tested (rabbit, rat, mouse, and pig). The protein is Complement inhibitor RaCI3 of Dermacentor andersoni (Rocky mountain wood tick).